A 289-amino-acid polypeptide reads, in one-letter code: Protease HtpX (289 aa).

2 helical membrane passes run 5-25 (IVLF…VMSL) and 33-53 (MSGL…ISLL). Histidine 140 contributes to the Zn(2+) binding site. The active site involves glutamate 141. Histidine 144 is a Zn(2+) binding site. 2 helical membrane-spanning segments follow: residues 155–175 (LLQG…GGFI) and 193–213 (GIVL…TMWF). Glutamate 218 serves as a coordination point for Zn(2+).

Belongs to the peptidase M48B family. The cofactor is Zn(2+).

The protein resides in the cell inner membrane. This Xylella fastidiosa (strain M23) protein is Protease HtpX.